The chain runs to 172 residues: 3-phenylpropionate/cinnamic acid dioxygenase subunit beta (172 aa).

Belongs to the bacterial ring-hydroxylating dioxygenase beta subunit family. As to quaternary structure, this dioxygenase system consists of four proteins: the two subunits of the hydroxylase component (HcaE and HcaF), a ferredoxin (HcaC) and a ferredoxin reductase (HcaD).

It catalyses the reaction 3-phenylpropanoate + NADH + O2 + H(+) = 3-(cis-5,6-dihydroxycyclohexa-1,3-dien-1-yl)propanoate + NAD(+). It carries out the reaction (E)-cinnamate + NADH + O2 + H(+) = (2E)-3-(cis-5,6-dihydroxycyclohexa-1,3-dien-1-yl)prop-2-enoate + NAD(+). The protein operates within aromatic compound metabolism; 3-phenylpropanoate degradation. In terms of biological role, part of the multicomponent 3-phenylpropionate dioxygenase. Converts 3-phenylpropionic acid (PP) and cinnamic acid (CI) into 3-phenylpropionate-dihydrodiol (PP-dihydrodiol) and cinnamic acid-dihydrodiol (CI-dihydrodiol), respectively. The protein is 3-phenylpropionate/cinnamic acid dioxygenase subunit beta of Escherichia coli O17:K52:H18 (strain UMN026 / ExPEC).